The following is a 142-amino-acid chain: Large ribosomal subunit protein uL13 (142 aa).

The protein belongs to the universal ribosomal protein uL13 family. In terms of assembly, part of the 50S ribosomal subunit.

Functionally, this protein is one of the early assembly proteins of the 50S ribosomal subunit, although it is not seen to bind rRNA by itself. It is important during the early stages of 50S assembly. In Pseudoalteromonas atlantica (strain T6c / ATCC BAA-1087), this protein is Large ribosomal subunit protein uL13.